We begin with the raw amino-acid sequence, 532 residues long: Protein tweety homolog 2 (532 aa).

Residues 1 to 44 are Extracellular-facing; sequence MPAARVEYIAPWWVVWLHSVPHLGLRLQRVDSTFSPGDETYQES. A helical transmembrane segment spans residues 45–65; the sequence is LLFLGVLAAIGLGLNLIFLTV. Topologically, residues 66–87 are cytoplasmic; sequence YLVCTCCCRRDHTVQTKQQESC. A helical transmembrane segment spans residues 88–108; that stretch reads CVTWTAVVAGLLCCAAVGVGF. Residues 109–213 are Extracellular-facing; it reads YGNSETNDGM…QTAYVEYYRW (105 aa). Residues glutamate 113 and aspartate 116 each contribute to the Ca(2+) site. A glycan (N-linked (GlcNAc...) asparagine) is linked at asparagine 129. The RGD signature appears at 164-166; the sequence is RGD. Threonine 199 bears the Phosphothreonine mark. A helical membrane pass occupies residues 214-234; sequence LSYLLLFILDLVICLVTCLGL. The Cytoplasmic portion of the chain corresponds to 235-240; sequence ARRSKC. Residues 241–261 traverse the membrane as a helical segment; the sequence is LLASMLCCGILTLILSWASLA. Residues 262–385 are Extracellular-facing; that stretch reads ADAAAAVGTS…DALTGICYDG (124 aa). 2 cysteine pairs are disulfide-bonded: cysteine 274-cysteine 382 and cysteine 300-cysteine 367. N-linked (GlcNAc...) asparagine glycans are attached at residues asparagine 283 and asparagine 352. A helical membrane pass occupies residues 386-406; that stretch reads IEGLLFLGLFSLLAALAFSTL. The Cytoplasmic segment spans residues 407-532; the sequence is TCAGPRAWKY…EHLRHYEFPS (126 aa). Phosphoserine is present on serine 504. The PY-motif; mediates interaction with NEDD4L motif lies at 506–509; that stretch reads PPTY.

It belongs to the tweety family. As to quaternary structure, forms cis-homodimers in the presence of Ca(+2) and forms monomers and trans-dimers in the absence of Ca(2+). Interacts with NEDD4L. Ubiquitinated by NEDD4L, leading to its proteasomal degradation.

Its subcellular location is the cell membrane. The enzyme catalyses chloride(in) = chloride(out). It carries out the reaction L-glutamate(out) = L-glutamate(in). With respect to regulation, inhibited by (4-[(2-butyl-6,7-dichloro-2- cyclopentyl-2,3-dihydro-1-oxo-1H-inden-5-yl)oxy]butanoic acid). Functionally, calcium-independent, swelling-dependent volume-regulated anion channel (VRAC-swell) which plays a pivotal role in the process of regulatory volume decrease (RVD) in the brain through the efflux of anions like chloride and organic osmolytes like glutamate. Probable large-conductance Ca(2+)-activated chloride channel. In Mus musculus (Mouse), this protein is Protein tweety homolog 2 (Ttyh2).